We begin with the raw amino-acid sequence, 251 residues long: Pyridoxine 5'-phosphate synthase (251 aa).

Asparagine 7 serves as a coordination point for 3-amino-2-oxopropyl phosphate. Residue 9 to 10 coordinates 1-deoxy-D-xylulose 5-phosphate; sequence DH. 3-amino-2-oxopropyl phosphate is bound at residue arginine 18. The active-site Proton acceptor is the histidine 43. Residues arginine 45 and histidine 50 each contribute to the 1-deoxy-D-xylulose 5-phosphate site. The active-site Proton acceptor is the glutamate 70. Threonine 100 is a binding site for 1-deoxy-D-xylulose 5-phosphate. Histidine 198 functions as the Proton donor in the catalytic mechanism. 3-amino-2-oxopropyl phosphate is bound by residues alanine 199 and 220 to 221; that span reads GH.

It belongs to the PNP synthase family. As to quaternary structure, homooctamer; tetramer of dimers.

It is found in the cytoplasm. It catalyses the reaction 3-amino-2-oxopropyl phosphate + 1-deoxy-D-xylulose 5-phosphate = pyridoxine 5'-phosphate + phosphate + 2 H2O + H(+). The protein operates within cofactor biosynthesis; pyridoxine 5'-phosphate biosynthesis; pyridoxine 5'-phosphate from D-erythrose 4-phosphate: step 5/5. Functionally, catalyzes the complicated ring closure reaction between the two acyclic compounds 1-deoxy-D-xylulose-5-phosphate (DXP) and 3-amino-2-oxopropyl phosphate (1-amino-acetone-3-phosphate or AAP) to form pyridoxine 5'-phosphate (PNP) and inorganic phosphate. This chain is Pyridoxine 5'-phosphate synthase, found in Dechloromonas aromatica (strain RCB).